We begin with the raw amino-acid sequence, 543 residues long: Cyclohexanone 1,2-monooxygenase (543 aa).

The FAD site is built by F16, D37, W46, D57, Y63, and V110.

The protein belongs to the FAD-binding monooxygenase family. FAD is required as a cofactor.

The enzyme catalyses cyclohexanone + NADPH + O2 + H(+) = hexano-6-lactone + NADP(+) + H2O. This Acinetobacter sp protein is Cyclohexanone 1,2-monooxygenase.